The following is a 221-amino-acid chain: Large ribosomal subunit protein uL3 (221 aa).

The protein belongs to the universal ribosomal protein uL3 family. In terms of assembly, part of the 50S ribosomal subunit. Forms a cluster with proteins L14 and L19.

In terms of biological role, one of the primary rRNA binding proteins, it binds directly near the 3'-end of the 23S rRNA, where it nucleates assembly of the 50S subunit. The chain is Large ribosomal subunit protein uL3 from Chlamydia trachomatis serovar A (strain ATCC VR-571B / DSM 19440 / HAR-13).